The chain runs to 135 residues: Large ribosomal subunit protein uL16c (135 aa).

It belongs to the universal ribosomal protein uL16 family. As to quaternary structure, part of the 50S ribosomal subunit.

The protein resides in the plastid. Its subcellular location is the chloroplast. The polypeptide is Large ribosomal subunit protein uL16c (Stigeoclonium helveticum (Green alga)).